The sequence spans 50 residues: Parvalbumin (50 aa).

An EF-hand domain is found at 38–50 (KTHEQVKKVFNIL).

This sequence belongs to the parvalbumin family.

Probably regulates the activity of the caudal neurosecretory system. Binds two calcium ions. The sequence is that of Parvalbumin from Scyliorhinus canicula (Small-spotted catshark).